The following is a 1143-amino-acid chain: Disease resistance protein Pik-1 (1143 aa).

The interval 1–190 is structured coiled coil (CC) domain; that stretch reads MEAAAMAVTA…PLRIMGGEMQ (190 aa). One can recognise an HMA domain in the interval 189–258; the sequence is MQKIVFKIPM…KVGHAELLQV (70 aa). Positions 191-264 are HMA-like domain; it reads KIVFKIPMVD…LLQVSQVKED (74 aa). Residues 282–570 enclose the NB-ARC domain; sequence HEVKTICILG…WIAEGFVSEE (289 aa). 10 LRR repeats span residues 681–706, 708–731, 732–754, 756–777, 778–800, 802–823, 824–848, 945–968, 979–1002, and 1004–1027; these read FKRL…ICEQ, SLRV…MRKL, KHLE…IGEL, HLRI…IREL, QHLH…VGKL, NLKI…IGEL, NHLQ…QISQ, MPNL…INGT, DSRL…EFKF, and AGPA…VFRC.

Belongs to the disease resistance NB-LRR family. Interacts with AVR-Pik through its N-terminal part containing the HMA-like domain.

Disease resistance (R) protein that specifically recognizes the AVR-Pik effector avirulence protein from M.oryzae. Resistance proteins guard the plant against pathogens that contain an appropriate avirulence protein via an indirect interaction with this avirulence protein. That triggers a defense system including the hypersensitive response, which restricts the pathogen growth. Contribution of Pik-2 is required to recognize the effector avirulence protein AVR-Pik. In Oryza sativa subsp. japonica (Rice), this protein is Disease resistance protein Pik-1.